Consider the following 231-residue polypeptide: Ribosyldihydronicotinamide dehydrogenase [quinone] (231 aa).

FAD is bound by residues His12, 18 to 21 (FNGS), and 104 to 107 (LYWF). 127-129 (FDV) lines the substrate pocket. Residues 148 to 151 (TTGG) and Tyr156 each bind FAD. The Zn(2+) site is built by His174 and His178. Residue Glu194 participates in FAD binding. Ser197 carries the post-translational modification Phosphoserine. Arg201 serves as a coordination point for FAD. Residue Cys223 coordinates Zn(2+).

It belongs to the NAD(P)H dehydrogenase (quinone) family. As to quaternary structure, homodimer. Requires Zn(2+) as cofactor. It depends on FAD as a cofactor.

The protein resides in the cytoplasm. The catalysed reaction is 1-(beta-D-ribofuranosyl)-1,4-dihydronicotinamide + a quinone + H(+) = beta-nicotinamide D-riboside + a quinol. In terms of biological role, the enzyme apparently serves as a quinone reductase in connection with conjugation reactions of hydroquinones involved in detoxification pathways as well as in biosynthetic processes such as the vitamin K-dependent gamma-carboxylation of glutamate residues in prothrombin synthesis. This chain is Ribosyldihydronicotinamide dehydrogenase [quinone] (Nqo2), found in Rattus norvegicus (Rat).